The following is a 151-amino-acid chain: Cysteine proteinase inhibitor 10 (151 aa).

The N-terminal stretch at 1–22 (MATSPMLFLVSLLLVLVAAATG) is a signal peptide. The Cystatin domain maps to 40-109 (GGRTEIRDVG…GVAYYLKVAA (70 aa)). Residues 96–100 (QVVSG) carry the Secondary area of contact motif.

Belongs to the cystatin family. Phytocystatin subfamily.

The protein localises to the secreted. Functionally, specific inhibitor of cysteine proteinases. Probably involved in the regulation of endogenous processes and in defense against pests and pathogens. This Oryza sativa subsp. indica (Rice) protein is Cysteine proteinase inhibitor 10.